Reading from the N-terminus, the 248-residue chain is 14-3-3 protein sigma (248 aa).

Residues S5, S74, and S248 each carry the phosphoserine modification.

This sequence belongs to the 14-3-3 family. Homodimer. Interacts with KRT17 and SAMSN1. Found in a complex with XPO7, EIF4A1, ARHGAP1, VPS26A, VPS29 and VPS35. Interacts with GAB2. Interacts with SRPK2. Interacts with COPS6. Interacts with COP1; this interaction leads to proteasomal degradation. Interacts with the 'Thr-369' phosphorylated form of DAPK2. Interacts with PI4KB. Interacts with SLITRK1. Interacts with LRRK2; this interaction is dependent on LRRK2 phosphorylation. Interacts with PKP3 (via N-terminus); the interaction maintains the cytoplasmic pool of PKP3, facilitates PKP3 exchange at desmosomes and restricts PKP3 localization to existing desmosome cell junctions. Interacts with LCP2. In terms of processing, ubiquitinated. Ubiquitination by RFFL induces proteasomal degradation and indirectly regulates p53/TP53 activation. As to expression, expressed in dorsal skin (at protein level). Expressed in the basal layer of skin epithelium and in outer root sheath of hair follicle.

Its subcellular location is the cytoplasm. It localises to the nucleus. It is found in the secreted. Adapter protein implicated in the regulation of a large spectrum of both general and specialized signaling pathways. Binds to a large number of partners, usually by recognition of a phosphoserine or phosphothreonine motif. Binding generally results in the modulation of the activity of the binding partner. Promotes cytosolic retention of GBP1 GTPase by binding to phosphorylated GBP1, thereby inhibiting the innate immune response. Also acts as a TP53/p53-regulated inhibitor of G2/M progression. When bound to KRT17, regulates protein synthesis and epithelial cell growth by stimulating Akt/mTOR pathway. Acts to maintain desmosome cell junction adhesion in epithelial cells via interacting with and sequestering PKP3 to the cytoplasm, thereby restricting its translocation to existing desmosome structures and therefore maintaining desmosome protein homeostasis. Also acts to facilitate PKP3 exchange at desmosome plaques, thereby maintaining keratinocyte intercellular adhesion. May also regulate MDM2 autoubiquitination and degradation and thereby activate p53/TP53. This is 14-3-3 protein sigma (Sfn) from Mus musculus (Mouse).